Reading from the N-terminus, the 184-residue chain is PEVERKSKITASRKLLKSLMLAKAKECQQEHEAREAEKVRYLAERIPALQTRGLSLSALQDLCRQLHAKVEVVDEERYDIEAKCLHNTREIKDLKLKVLDLRGKFKRPPLRRVRVSADAMLRALLGSKHKVSMDLRANLKSVKKEDTEKERPVEVGDWRKNVEAMSGMEGRKKMFDAAKSPTSQ.

Proline 1 is subject to N-acetylproline; partial. The segment at 1–45 (PEVERKSKITASRKLLKSLMLAKAKECQQEHEAREAEKVRYLAER) is involved in binding TNC. Serine 55 carries the phosphoserine modification. The interval 94 to 115 (LKLKVLDLRGKFKRPPLRRVRV) is involved in binding TNC and actin.

It belongs to the troponin I family. As to quaternary structure, binds to actin and tropomyosin. In the muscle sample, approximately 25% of the chains were blocked. Pro-1 is probably acetylated. Post-translationally, the N-terminus is blocked.

Functionally, troponin I is the inhibitory subunit of troponin, the thin filament regulatory complex which confers calcium-sensitivity to striated muscle actomyosin ATPase activity. The protein is Troponin I, slow skeletal muscle (TNNI1) of Oryctolagus cuniculus (Rabbit).